The chain runs to 622 residues: MVRRWIPSGRHLRNNDNTGDDDDSEFTNSMDSGMSIPSLRDSMTTRSSHNDPIKPALMNDSNKVKNLEKELTNAKIKIQVLYEYIRRIPNKDGNAPSLGNDTDFRNSIIEGLNLEINKLKQDLKAKEVEYQDTLQFVQENLENSESIVNTINHLLSFILTHFNEQDENAHLLDKEERETLEETLELSSDYVLEKMDTLSKFIIQFLQDFLHSKSRAESKQDKEEFLSLAQSSPAGSQLESRDSPSSKEENTDGGYQNDEIHDSNNHIDTENVMANSTSLPISAVESRFEKTLDTQLEIVIENLHKEYDQFINSIRLKFEKSQKLEKIIASKLNEQSHLLDSLELEENSSSVIEKQDHLISQLKEKIESQSVLINNLEKLKEDIIKMKQNEKVLTKELETQTKINKLKENNWDSYINDLEKQINDLQIDKSEEFHVIQNQLDKLDLENYQLKNQLNTLDNQKLILSQYESNFIKFNQNLLLHLDSIFNILQKILQESSIAQFDRKMKSIKSVPNALKNLNLIQPKLESLYTFIETALESIINSYISSLISMETPEQPHQQGNELTATPNKELTLRIEELQRRWISERERRKLDANASEARIKALEQENESLRSKLFNLSINNP.

Disordered regions lie at residues 1 to 58 and 221 to 263; these read MVRR…PALM and DKEE…IHDS. Positions 228 to 238 are enriched in polar residues; that stretch reads LAQSSPAGSQL. Residues 239-250 show a composition bias toward basic and acidic residues; sequence ESRDSPSSKEEN.

As to quaternary structure, homooligomer. Interacts with CDC5, KAR1, KIN4, SPC97, SPC98, STU2 and TUB4. Post-translationally, phosphorylated by CDC5.

The protein resides in the cytoplasm. Its subcellular location is the cytoskeleton. The protein localises to the microtubule organizing center. It localises to the spindle pole body. Its function is as follows. Spindle pole body (SPB) component that acts as the gamma-tubulin complex-binding protein of the SPB outer plaque. Anchors cytoplasmic microtubules at the half bridge of the spindle pole body (SPB) and accordingly functions in nuclear position and spindle orientation, including anaphase spindle migration into the bud. Recruits KIN4 kinase to both SPBs when cytoplasmic microtubules are defective, to delay mitotic exit. Links cytoplasmic microtubules with spindle orientation checkpoint (SPOC) components and, therefore, could function as part of the sensors of spindle orientation defects. Required for cytoplasmic astral microtubule growth during mitosis. Is strictly required for mating and karyogamy. In Saccharomyces cerevisiae (strain ATCC 204508 / S288c) (Baker's yeast), this protein is Gamma tubulin complex adapter SPC72 (SPC72).